The primary structure comprises 139 residues: ATP synthase epsilon chain (139 aa).

This sequence belongs to the ATPase epsilon chain family. In terms of assembly, F-type ATPases have 2 components, CF(1) - the catalytic core - and CF(0) - the membrane proton channel. CF(1) has five subunits: alpha(3), beta(3), gamma(1), delta(1), epsilon(1). CF(0) has three main subunits: a, b and c.

The protein resides in the cell inner membrane. Its function is as follows. Produces ATP from ADP in the presence of a proton gradient across the membrane. The protein is ATP synthase epsilon chain of Acinetobacter baumannii (strain SDF).